The following is a 209-amino-acid chain: Interleukin-6 (209 aa).

A signal peptide spans Arg1–Pro26. Positions Pro28 to Pro47 are disordered. A disulfide bond links Cys69 and Cys75. Ser78 is modified (phosphoserine). Residues Cys98 and Cys108 are joined by a disulfide bond.

It belongs to the IL-6 superfamily. In terms of assembly, component of a hexamer of two molecules each of IL6, IL6R and IL6ST; first binds to IL6R to associate with the signaling subunit IL6ST. Interacts with IL6R (via the N-terminal ectodomain); this interaction may be affected by IL6R-binding with SORL1, hence decreasing IL6 cis signaling. Interacts with SORL1 (via the N-terminal ectodomain); this interaction leads to IL6 internalization and lysosomal degradation. May form a trimeric complex with the soluble SORL1 ectodomain and soluble IL6R receptor; this interaction might stabilize circulating IL6, hence promoting IL6 trans signaling.

It localises to the secreted. Its function is as follows. Cytokine with a wide variety of biological functions in immunity, tissue regeneration, and metabolism. Binds to IL6R, then the complex associates to the signaling subunit IL6ST/gp130 to trigger the intracellular IL6-signaling pathway. The interaction with the membrane-bound IL6R and IL6ST stimulates 'classic signaling', whereas the binding of IL6 and soluble IL6R to IL6ST stimulates 'trans-signaling'. Alternatively, 'cluster signaling' occurs when membrane-bound IL6:IL6R complexes on transmitter cells activate IL6ST receptors on neighboring receiver cells. Functionally, IL6 is a potent inducer of the acute phase response. Rapid production of IL6 contributes to host defense during infection and tissue injury, but excessive IL6 synthesis is involved in disease pathology. In the innate immune response, is synthesized by myeloid cells, such as macrophages and dendritic cells, upon recognition of pathogens through toll-like receptors (TLRs) at the site of infection or tissue injury. In the adaptive immune response, is required for the differentiation of B cells into immunoglobulin-secreting cells. Plays a major role in the differentiation of CD4(+) T cell subsets. Essential factor for the development of T follicular helper (Tfh) cells that are required for the induction of germinal-center formation. Required to drive naive CD4(+) T cells to the Th17 lineage. Also required for proliferation of myeloma cells and the survival of plasmablast cells. Acts as an essential factor in bone homeostasis and on vessels directly or indirectly by induction of VEGF, resulting in increased angiogenesis activity and vascular permeability. Induces, through 'trans-signaling' and synergistically with IL1B and TNF, the production of VEGF. Involved in metabolic controls, is discharged into the bloodstream after muscle contraction increasing lipolysis and improving insulin resistance. 'Trans-signaling' in central nervous system also regulates energy and glucose homeostasis. Mediates, through GLP-1, crosstalk between insulin-sensitive tissues, intestinal L cells and pancreatic islets to adapt to changes in insulin demand. Also acts as a myokine. Plays a protective role during liver injury, being required for maintenance of tissue regeneration. Also has a pivotal role in iron metabolism by regulating HAMP/hepcidin expression upon inflammation or bacterial infection. Through activation of IL6ST-YAP-NOTCH pathway, induces inflammation-induced epithelial regeneration. The protein is Interleukin-6 (IL6) of Phoca vitulina (Harbor seal).